The following is a 212-amino-acid chain: Thymidylate kinase (212 aa).

11–18 (GGEGVGKS) contributes to the ATP binding site.

Belongs to the thymidylate kinase family.

It carries out the reaction dTMP + ATP = dTDP + ADP. In terms of biological role, phosphorylation of dTMP to form dTDP in both de novo and salvage pathways of dTTP synthesis. In Chromohalobacter salexigens (strain ATCC BAA-138 / DSM 3043 / CIP 106854 / NCIMB 13768 / 1H11), this protein is Thymidylate kinase.